The following is a 206-amino-acid chain: Repetitive proline-rich cell wall protein 1 (206 aa).

An N-terminal signal peptide occupies residues 1-22; the sequence is MASSNFLVLLLFALFAIPQGLA. 33 consecutive repeat copies span residues 32–36, 37–41, 42–46, 47–51, 52–56, 57–61, 62–66, 67–71, 72–76, 77–81, 82–86, 87–91, 92–96, 97–101, 102–106, 107–111, 112–116, 117–121, 122–126, 127–131, 132–136, 137–141, 142–146, 147–151, 152–156, 157–161, 162–166, 167–171, 172–176, 177–181, 182–186, 187–191, and 192–196. The segment at 32–201 is 34 X 5 AA approximate tandem repeats of P-P-V-[EVY]-K; that stretch reads PPVYKPPVEK…PPVEKPPVYG (170 aa). The disordered stretch occupies residues 51–84; sequence KPPVYKPPVEKPPVYKPPVYKPPVYKPPVVKPPV. Residues 132 to 206 form a disordered region; it reads PPVEKPPVYK…PPVYGPPHHP (75 aa). The 34; approximate repeat unit spans residues 197-201; it reads PPVYG.

This sequence belongs to the plant proline-rich protein superfamily. ENOD12 family. Expressed in hypocotyls, roots and mature root nodules.

It localises to the secreted. The protein resides in the cell wall. In terms of biological role, this is a developmentally regulated putative cell wall protein. The polypeptide is Repetitive proline-rich cell wall protein 1 (PRP1) (Medicago truncatula (Barrel medic)).